A 599-amino-acid chain; its full sequence is Cytadherence high molecular weight protein 3 (599 aa).

Positions 220-236 are enriched in polar residues; sequence VQVDSGSQNHSFNNSPS. The tract at residues 220 to 241 is disordered; that stretch reads VQVDSGSQNHSFNNSPSLKPPL.

It is found in the cell projection. It localises to the attachment organelle membrane. Component of the cytoskeleton-like structure which stabilizes the shape of the wall-less mycoplasma. This cytoskeleton-like network of accessory proteins containing HMW proteins 1 to 5 allows the proper anchoring of cytadhesin proteins in the mycoplasmal membrane at the attachment organelle. Essential for successful surface parasitism. This Mycoplasma genitalium (strain ATCC 33530 / DSM 19775 / NCTC 10195 / G37) (Mycoplasmoides genitalium) protein is Cytadherence high molecular weight protein 3 (hmw3).